Here is a 293-residue protein sequence, read N- to C-terminus: Acetyl-coenzyme A carboxylase carboxyl transferase subunit beta (293 aa).

Residues 29–293 (LWVKCSECSQ…GVKELAEANT (265 aa)) form the CoA carboxyltransferase N-terminal domain. Residues Cys-33, Cys-36, Cys-52, and Cys-55 each contribute to the Zn(2+) site. The C4-type zinc finger occupies 33–55 (CSECSQVAYRKDLISNFNVCNNC).

The protein belongs to the AccD/PCCB family. In terms of assembly, acetyl-CoA carboxylase is a heterohexamer composed of biotin carboxyl carrier protein (AccB), biotin carboxylase (AccC) and two subunits each of ACCase subunit alpha (AccA) and ACCase subunit beta (AccD). Requires Zn(2+) as cofactor.

Its subcellular location is the cytoplasm. The enzyme catalyses N(6)-carboxybiotinyl-L-lysyl-[protein] + acetyl-CoA = N(6)-biotinyl-L-lysyl-[protein] + malonyl-CoA. It functions in the pathway lipid metabolism; malonyl-CoA biosynthesis; malonyl-CoA from acetyl-CoA: step 1/1. Component of the acetyl coenzyme A carboxylase (ACC) complex. Biotin carboxylase (BC) catalyzes the carboxylation of biotin on its carrier protein (BCCP) and then the CO(2) group is transferred by the transcarboxylase to acetyl-CoA to form malonyl-CoA. This chain is Acetyl-coenzyme A carboxylase carboxyl transferase subunit beta, found in Prochlorococcus marinus (strain AS9601).